The primary structure comprises 1062 residues: Isoleucine--tRNA ligase (1062 aa).

The 'HIGH' region motif lies at 47–57 (PYTTGHIHLGT). Residues 591 to 595 (KMSKS) carry the 'KMSKS' region motif. An ATP-binding site is contributed by Lys594.

This sequence belongs to the class-I aminoacyl-tRNA synthetase family. IleS type 2 subfamily. Monomer. Zn(2+) serves as cofactor.

The protein localises to the cytoplasm. It carries out the reaction tRNA(Ile) + L-isoleucine + ATP = L-isoleucyl-tRNA(Ile) + AMP + diphosphate. In terms of biological role, catalyzes the attachment of isoleucine to tRNA(Ile). As IleRS can inadvertently accommodate and process structurally similar amino acids such as valine, to avoid such errors it has two additional distinct tRNA(Ile)-dependent editing activities. One activity is designated as 'pretransfer' editing and involves the hydrolysis of activated Val-AMP. The other activity is designated 'posttransfer' editing and involves deacylation of mischarged Val-tRNA(Ile). The polypeptide is Isoleucine--tRNA ligase (Methanospirillum hungatei JF-1 (strain ATCC 27890 / DSM 864 / NBRC 100397 / JF-1)).